A 291-amino-acid chain; its full sequence is Glycine--tRNA ligase alpha subunit (291 aa).

It belongs to the class-II aminoacyl-tRNA synthetase family. As to quaternary structure, tetramer of two alpha and two beta subunits.

Its subcellular location is the cytoplasm. It carries out the reaction tRNA(Gly) + glycine + ATP = glycyl-tRNA(Gly) + AMP + diphosphate. This Rhizorhabdus wittichii (strain DSM 6014 / CCUG 31198 / JCM 15750 / NBRC 105917 / EY 4224 / RW1) (Sphingomonas wittichii) protein is Glycine--tRNA ligase alpha subunit.